The primary structure comprises 453 residues: Ribosomal protein uS12 methylthiotransferase RimO (453 aa).

The MTTase N-terminal domain occupies 5–120 (PKVGFVSLGC…VMQAVHSHLP (116 aa)). Residues Cys-14, Cys-50, Cys-79, Cys-151, Cys-155, and Cys-158 each coordinate [4Fe-4S] cluster. A Radical SAM core domain is found at 137-383 (LTPRHYAYLK…EVAEEVSAHR (247 aa)). The TRAM domain maps to 385-453 (QRKVGKTLKV…ADGHDLWGEV (69 aa)).

This sequence belongs to the methylthiotransferase family. RimO subfamily. Requires [4Fe-4S] cluster as cofactor.

Its subcellular location is the cytoplasm. It carries out the reaction L-aspartate(89)-[ribosomal protein uS12]-hydrogen + (sulfur carrier)-SH + AH2 + 2 S-adenosyl-L-methionine = 3-methylsulfanyl-L-aspartate(89)-[ribosomal protein uS12]-hydrogen + (sulfur carrier)-H + 5'-deoxyadenosine + L-methionine + A + S-adenosyl-L-homocysteine + 2 H(+). In terms of biological role, catalyzes the methylthiolation of an aspartic acid residue of ribosomal protein uS12. The polypeptide is Ribosomal protein uS12 methylthiotransferase RimO (Burkholderia cenocepacia (strain ATCC BAA-245 / DSM 16553 / LMG 16656 / NCTC 13227 / J2315 / CF5610) (Burkholderia cepacia (strain J2315))).